The sequence spans 421 residues: Nuclear speckle RNA-binding protein B (421 aa).

3 disordered regions span residues 1–64 (MDNR…VNIY), 86–114 (TGQT…MVDT), and 197–226 (TDPQ…GIPH). The span at 33–44 (PLAPPHPQPQPP) shows a compositional bias: pro residues. Residues 89–103 (TSTSTTSSSSSSSTS) show a composition bias toward low complexity. In terms of domain architecture, RRM spans 323 to 409 (NTLYVEGLPS…KILRLQFFRN (87 aa)).

Isoform 1: Expressed in root meristems, lateral root primordia, root vascular tissues and cotyledon vascular tissues. Isoform 2: Expressed in root meristems, lateral root primordia and root vascular tissues.

It is found in the nucleus speckle. Functionally, alternative splicing (AS) regulator that binds to specific mRNAs and modulates auxin effects on the transcriptome. Displaced from its targets upon binding to AS competitor long non-coding RNA (ASCO-RNA). The sequence is that of Nuclear speckle RNA-binding protein B from Arabidopsis thaliana (Mouse-ear cress).